A 315-amino-acid chain; its full sequence is Ribose-phosphate pyrophosphokinase (315 aa).

Residues 37-39 (DGE) and 96-97 (RQ) each bind ATP. Positions 131 and 170 each coordinate Mg(2+). Residue lysine 194 is part of the active site. D-ribose 5-phosphate is bound by residues arginine 196, aspartate 220, and 224–228 (DTGGT).

Belongs to the ribose-phosphate pyrophosphokinase family. Class I subfamily. As to quaternary structure, homohexamer. Requires Mg(2+) as cofactor.

Its subcellular location is the cytoplasm. It catalyses the reaction D-ribose 5-phosphate + ATP = 5-phospho-alpha-D-ribose 1-diphosphate + AMP + H(+). It functions in the pathway metabolic intermediate biosynthesis; 5-phospho-alpha-D-ribose 1-diphosphate biosynthesis; 5-phospho-alpha-D-ribose 1-diphosphate from D-ribose 5-phosphate (route I): step 1/1. Functionally, involved in the biosynthesis of the central metabolite phospho-alpha-D-ribosyl-1-pyrophosphate (PRPP) via the transfer of pyrophosphoryl group from ATP to 1-hydroxyl of ribose-5-phosphate (Rib-5-P). In Buchnera aphidicola subsp. Acyrthosiphon pisum (strain APS) (Acyrthosiphon pisum symbiotic bacterium), this protein is Ribose-phosphate pyrophosphokinase.